A 220-amino-acid polypeptide reads, in one-letter code: Probable GTP-binding protein EngB (220 aa).

An EngB-type G domain is found at 24–207 (PQPEVAFAGR…HELIESWIAP (184 aa)). Residues 32 to 39 (GRSNAGKS), 59 to 63 (GRTQH), 81 to 84 (DLPG), 148 to 151 (TKCD), and 185 to 188 (LFSA) contribute to the GTP site. Residues Ser-39 and Thr-61 each coordinate Mg(2+).

It belongs to the TRAFAC class TrmE-Era-EngA-EngB-Septin-like GTPase superfamily. EngB GTPase family. Requires Mg(2+) as cofactor.

In terms of biological role, necessary for normal cell division and for the maintenance of normal septation. The polypeptide is Probable GTP-binding protein EngB (Paraburkholderia phymatum (strain DSM 17167 / CIP 108236 / LMG 21445 / STM815) (Burkholderia phymatum)).